The sequence spans 611 residues: 1,4-alpha-glucan branching enzyme GlgB (611 aa).

Asp302 functions as the Nucleophile in the catalytic mechanism. The active-site Proton donor is the Glu343.

This sequence belongs to the glycosyl hydrolase 13 family. GlgB subfamily. In terms of assembly, monomer.

It catalyses the reaction Transfers a segment of a (1-&gt;4)-alpha-D-glucan chain to a primary hydroxy group in a similar glucan chain.. It functions in the pathway glycan biosynthesis; glycogen biosynthesis. Functionally, catalyzes the formation of the alpha-1,6-glucosidic linkages in glycogen by scission of a 1,4-alpha-linked oligosaccharide from growing alpha-1,4-glucan chains and the subsequent attachment of the oligosaccharide to the alpha-1,6 position. This is 1,4-alpha-glucan branching enzyme GlgB from Fusobacterium nucleatum subsp. nucleatum (strain ATCC 25586 / DSM 15643 / BCRC 10681 / CIP 101130 / JCM 8532 / KCTC 2640 / LMG 13131 / VPI 4355).